The following is a 311-amino-acid chain: DNA repair and recombination protein RadA (311 aa).

Position 104 to 111 (104 to 111 (GEFGSGKS)) interacts with ATP.

This sequence belongs to the eukaryotic RecA-like protein family.

In terms of biological role, involved in DNA repair and in homologous recombination. Binds and assemble on single-stranded DNA to form a nucleoprotein filament. Hydrolyzes ATP in a ssDNA-dependent manner and promotes DNA strand exchange between homologous DNA molecules. The sequence is that of DNA repair and recombination protein RadA from Methanosphaera stadtmanae (strain ATCC 43021 / DSM 3091 / JCM 11832 / MCB-3).